Reading from the N-terminus, the 207-residue chain is Protein lin-7 homolog B (207 aa).

The Kinase interacting site signature appears at 1-13; that stretch reads MAALVEPLGLERD. One can recognise an L27 domain in the interval 10–65; the sequence is LERDVSRAVELLERLQRSGELPPQKLQALQRVLQSRFCSAIREVYEQLYDTLDITG. A PDZ domain is found at 93-175; that stretch reads VVELPKTDEG…SVKLVVRYTP (83 aa). Residues 187–207 are disordered; sequence KMRSARRRQQHQSYSSLESRG. Positions 197-207 are enriched in polar residues; the sequence is HQSYSSLESRG.

This sequence belongs to the lin-7 family. In terms of assembly, forms a complex with CASK and CASKIN1. Component of the brain-specific heterotrimeric complex (LIN-10-LIN-2-LIN-7 complex) composed of at least APBA1, CASK, and LIN7, which associates with the motor protein KIF17 to transport vesicles along microtubules. Forms a heterotrimeric complex composed of MMP5, LIN7B and PATJ; the N-terminal L27 domain of PALS1 interacts with the L27 domain of PATJ and the C-terminal L27 domain of PALS1 interacts with the L27 domain of LIN7B. Forms a heterotrimeric complex with DLG1 and CASK via their L27 domains. Interacts with DLG4 and GRIN2B as well as CDH1 and CTNNB1, the channels KCNJ12/Kir2.2, KCNJ4/Kir2.3 and probably KCNJ2/Kir2.1 and SLC6A12/BGT-1 via its PDZ domain. The association of LIN7A with cadherin and beta-catenin is calcium-dependent, occurs at synaptic junctions and requires the actin cytoskeleton. Interacts with EGFR, ERBB2, ERBB3 and ERBB4 with both PDZ and KID domains. Associates with KIF17 via APBA1. Interacts with ASIC3. Interacts with TOPK. Interacts with RTKN. Interacts with APBA1. Interacts with MPP7. Interacts with DLG2. Interacts with DLG3.

It localises to the cell membrane. The protein resides in the basolateral cell membrane. It is found in the cell junction. The protein localises to the postsynaptic density membrane. Its subcellular location is the tight junction. Plays a role in establishing and maintaining the asymmetric distribution of channels and receptors at the plasma membrane of polarized cells. Forms membrane-associated multiprotein complexes that may regulate delivery and recycling of proteins to the correct membrane domains. The tripartite complex composed of LIN7 (LIN7A, LIN7B or LIN7C), CASK and APBA1 associates with the motor protein KIF17 to transport vesicles containing N-methyl-D-aspartate (NMDA) receptor subunit NR2B along microtubules. This complex may have the potential to couple synaptic vesicle exocytosis to cell adhesion in brain. Ensures the proper localization of GRIN2B (subunit 2B of the NMDA receptor) to neuronal postsynaptic density and may function in localizing synaptic vesicles at synapses where it is recruited by beta-catenin and cadherin. Required to localize Kir2 channels, GABA transporter (SLC6A12) and EGFR/ERBB1, ERBB2, ERBB3 and ERBB4 to the basolateral membrane of epithelial cells. May increase the amplitude of ASIC3 acid-evoked currents by stabilizing the channel at the cell surface. This is Protein lin-7 homolog B (LIN7B) from Homo sapiens (Human).